The sequence spans 491 residues: Ribonuclease G (491 aa).

The region spanning 40–129 (GNIYKGRVTR…LTTDITLPSR (90 aa)) is the S1 motif domain. Residues D305 and D348 each coordinate Mg(2+).

It belongs to the RNase E/G family. RNase G subfamily. Homodimer, in equilibrium with possible higher multimers. Mg(2+) is required as a cofactor.

Its subcellular location is the cytoplasm. Functionally, an endonuclease that acts in the processing of the 5'-end of 16S rRNA and 23S rRNA. It prefers 5'-monophosphorylated substrates and cleaves single-stranded sites rich in A and U residues; contributes to tRNA processing and mRNA turnover. In Haemophilus influenzae (strain ATCC 51907 / DSM 11121 / KW20 / Rd), this protein is Ribonuclease G (rng).